Consider the following 123-residue polypeptide: Chaperone protein SycN (123 aa).

Interacts with YscB to form a complex which specifically binds to YopN.

The protein localises to the cytoplasm. It is found in the cell inner membrane. Functionally, functions as a specific chaperone for YopN. It could facilitate the secretion and the subsequent translocation of YopN. The polypeptide is Chaperone protein SycN (sycN) (Yersinia enterocolitica).